A 289-amino-acid polypeptide reads, in one-letter code: Syntaxin-3 (289 aa).

Over 1-263 (MKDRLEQLKA…VKYQSQARKK (263 aa)) the chain is Cytoplasmic. The stretch at 32 to 111 (MDEFFSEIEE…IEEDEVRSSA (80 aa)) forms a coiled coil. The 63-residue stretch at 191 to 253 (LSEIEGRHKD…EKARDETKKA (63 aa)) folds into the t-SNARE coiled-coil homology domain. A helical; Anchor for type IV membrane protein transmembrane segment spans residues 264-284 (LIIIIVLVVVLLGILALIIGL). Topologically, residues 285 to 289 (SVGLN) are extracellular.

It belongs to the syntaxin family. In terms of assembly, interacts with REEP6. Interacts with PRPH2 in rod and cone photoreceptors. Interacts with ROM1. Interacts with SNAP25. Interacts with VAMP2. As to quaternary structure, interacts with IPO5. As to expression, expressed in small intestine, kidney, pancreas, placenta as well as in retina. Weaker expression in lung, liver and heart. Not expressed in brain and skeletal muscle. Expressed only in the retina. In terms of tissue distribution, ubiquitously expressed.

The protein resides in the apical cell membrane. The protein localises to the nucleus. In terms of biological role, potentially involved in docking of synaptic vesicles at presynaptic active zones. Apical receptor involved in membrane fusion of apical vesicles. Functionally, essential for survival of retinal photoreceetors. Functions as a regulator of gene expression. The protein is Syntaxin-3 (STX3) of Homo sapiens (Human).